The primary structure comprises 531 residues: High affinity cysteine transporter (531 aa).

Over 1-54 (MSKVDVKIGADSISSSDEILVPSRLADVTLAFMEENDAAVPEITPEQEKKLKRK) the chain is Cytoplasmic. The helical transmembrane segment at 55–75 (LFLTIFTFVSAINLLLYMDKA) threads the bilayer. Residues 76–97 (TLSYDSILGFFEDTGLTQNTYN) are Lumenal-facing. The chain crosses the membrane as a helical span at residues 98–118 (TVNTLFYVGFAIGQFPGQYLA). At 119-120 (QK) the chain is on the cytoplasmic side. Residues 121–141 (LPLGKFLGGLLATWTILIFLS) form a helical membrane-spanning segment. The Lumenal segment spans residues 142–154 (CTAYNFSGVVALR). N-linked (GlcNAc...) asparagine glycosylation occurs at Asn-146. Residues 155–175 (FFLGLTESVVIPILITTMGMF) traverse the membrane as a helical segment. Over 176-186 (FDASERAAAQP) the chain is Cytoplasmic. A helical membrane pass occupies residues 187-207 (FFFAACMGSPIPTGFIAYGVL). The Lumenal portion of the chain corresponds to 208–218 (HITNPSISLWK). The chain crosses the membrane as a helical span at residues 219-239 (IFTIIIGGLTFIMTVVVILWF). Over 240 to 285 (PNNPADVKFFSIQERVWIIRRVQASTGSSIEQKVFKKSQFREAMKD) the chain is Cytoplasmic. A helical transmembrane segment spans residues 286 to 306 (YITWLFGLFFLLQQLANNLPY). At 307–324 (QQNLLFEGMGGVDALGST) the chain is on the lumenal side. Residues 325–345 (LVSVAGAGFAVVCAFIATLML) form a helical membrane-spanning segment. Topologically, residues 346-352 (AKWKNIS) are cytoplasmic. A helical membrane pass occupies residues 353-373 (ALTAIFWTLPALVGSIAAAAL). Residues 374 to 378 (PWDNK) are Lumenal-facing. Residues 379 to 399 (IGILANICMAGQIFGIPFIIA) traverse the membrane as a helical segment. Over 400–413 (LSWASSSASGYTKK) the chain is Cytoplasmic. Residues 414–436 (LTRSSVSLFAMGIANIISPQIWR) traverse the membrane as a helical segment. The Lumenal portion of the chain corresponds to 437 to 447 (EKDSPRFLPAW). A helical membrane pass occupies residues 448–468 (IVQIVLSFSLAPAILLLIHFI). Residues 469–498 (LKRRNNQRLKNYDENLQNYLDRIQLIESEN) adopt a coiled-coil conformation. The Cytoplasmic segment spans residues 469–531 (LKRRNNQRLK…LENETFIYPL (63 aa)). 2 positions are modified to phosphoserine: Ser-500 and Ser-501.

Belongs to the major facilitator superfamily. Allantoate permease family.

The protein localises to the cell membrane. It is found in the endoplasmic reticulum membrane. High affinity cysteine-specific transporter. Major contributor to cysteine transport when cysteine, at low concentrations, is provided as the sole sulfur source. This chain is High affinity cysteine transporter (YCT1), found in Saccharomyces cerevisiae (strain ATCC 204508 / S288c) (Baker's yeast).